The following is a 499-amino-acid chain: Proline dehydrogenase 1, mitochondrial (499 aa).

The N-terminal 72 residues, 1-72 (MATRLLRTNF…LDLSDQARLF (72 aa)), are a transit peptide targeting the mitochondrion.

Belongs to the proline oxidase family. The cofactor is FAD. In terms of tissue distribution, ubiquitous. Highest expression in pollen grains, in the stigma and in developing embryos.

It localises to the mitochondrion. It catalyses the reaction L-proline + a quinone = (S)-1-pyrroline-5-carboxylate + a quinol + H(+). The protein operates within amino-acid degradation; L-proline degradation into L-glutamate; L-glutamate from L-proline: step 1/2. Converts proline to delta-1-pyrroline-5-carboxylate. In Arabidopsis thaliana (Mouse-ear cress), this protein is Proline dehydrogenase 1, mitochondrial (POX1).